Consider the following 265-residue polypeptide: 5'-nucleotidase SurE (265 aa).

Positions 11, 12, 43, and 101 each coordinate a divalent metal cation.

This sequence belongs to the SurE nucleotidase family. Requires a divalent metal cation as cofactor.

It localises to the cytoplasm. The catalysed reaction is a ribonucleoside 5'-phosphate + H2O = a ribonucleoside + phosphate. In terms of biological role, nucleotidase that shows phosphatase activity on nucleoside 5'-monophosphates. This Synechococcus sp. (strain CC9311) protein is 5'-nucleotidase SurE.